Here is a 1429-residue protein sequence, read N- to C-terminus: Nitric oxide synthase 1 (1429 aa).

An interaction with NOSIP region spans residues 1–200 (MEEHTFGVQQ…LQDSGEQDEL (200 aa)). Positions 17–99 (SVRLFKRKVG…ETHVVLILRG (83 aa)) constitute a PDZ domain. Disordered stretches follow at residues 114 to 174 (DGTP…SVSQ) and 271 to 298 (NNPYSENEQSPASGKQSPTKNGSPSRCP). Positions 163–240 (QGRGQGAGSV…TGIQVDRDLD (78 aa)) are interaction with DYNLL1/PIN. Residues 272-294 (NPYSENEQSPASGKQSPTKNGSP) are compositionally biased toward polar residues. Ser-280 bears the Phosphoserine mark. A (6R)-L-erythro-5,6,7,8-tetrahydrobiopterin-binding site is contributed by Ser-334. Cys-415 serves as a coordination point for heme b. 4 residues coordinate L-arginine: Gln-478, Trp-587, Tyr-588, and Glu-592. Residues Val-677, Trp-678, and Phe-691 each contribute to the (6R)-L-erythro-5,6,7,8-tetrahydrobiopterin site. Tyr-706 contacts heme b. Residues 725-745 (KRRAIGFKKLAEAVKFSAKLM) are calmodulin-binding. Residues 755–935 (ATILYATETG…AFRTWAKKVF (181 aa)) form the Flavodoxin-like domain. FMN contacts are provided by Thr-761, Glu-762, Thr-763, Lys-765, Ser-766, Ser-807, Thr-808, and Gly-812. A phosphoserine mark is found at Ser-847, Ser-857, and Ser-858. FMN contacts are provided by Ser-886, His-891, Cys-893, Glu-919, and Gln-923. Residues 990 to 1237 (KRVSAARLLS…VRGAPSFHLP (248 aa)) enclose the FAD-binding FR-type domain. Arg-1010 lines the NADP(+) pocket. His-1032, Arg-1173, Tyr-1174, Tyr-1175, Ser-1176, Thr-1191, and Ala-1193 together coordinate FAD. Ser-1196 provides a ligand contact to NADP(+). Positions 1197, 1210, 1211, and 1212 each coordinate FAD. Residues Thr-1251, Arg-1284, Ser-1313, Arg-1314, Lys-1320, Tyr-1322, Gln-1324, Asp-1357, Thr-1398, and Arg-1400 each contribute to the NADP(+) site.

This sequence belongs to the NOS family. As to quaternary structure, homodimer. Interacts with DLG4; the interaction possibly being prevented by the association between NOS1 and CAPON. Forms a ternary complex with CAPON and RASD1. Forms a ternary complex with CAPON and SYN1. Interacts with ZDHHC23. Interacts with NOSIP; which may impair its synaptic location. Interacts with HTR4. Interacts with VAC14. Interacts (via N-terminal domain) with DLG4 (via N-terminal tandem pair of PDZ domains). Interacts with SLC6A4. Forms a complex with ASL, ASS1 and SLC7A1; the complex regulates cell-autonomous L-arginine synthesis and citrulline recycling while channeling extracellular L-arginine to nitric oxide synthesis pathway. Interacts with DMD; localizes NOS1 to sarcolemma in muscle cells. Interacts with DYNLL1; inhibits the nitric oxide synthase activity. The cofactor is heme b. FAD serves as cofactor. Requires FMN as cofactor. It depends on (6R)-L-erythro-5,6,7,8-tetrahydrobiopterin as a cofactor. Post-translationally, ubiquitinated; mediated by STUB1/CHIP in the presence of Hsp70 and Hsp40 (in vitro). In terms of tissue distribution, widely expressed in the nervous system: expressed in cerebrum, olfactory bulb, hippocampus, midbrain, cerebellum, pons, medulla oblongata, and spinal cord. Also found in skeletal muscle, where it is localized beneath the sarcolemma of fast twitch muscle fibers, and in spleen, heart, kidney, and liver. N-NOS-1 and N-NOS-2 are found in all parts of the nervous system. NNOS beta and gamma occur in a region-specific manner in the brain and NNOS beta expression is developmentally regulated. NNOS Mu is only found in mature skeletal and cardiac muscles.

It localises to the cell membrane. The protein resides in the sarcolemma. It is found in the cell projection. The protein localises to the dendritic spine. The catalysed reaction is 2 L-arginine + 3 NADPH + 4 O2 + H(+) = 2 L-citrulline + 2 nitric oxide + 3 NADP(+) + 4 H2O. With respect to regulation, stimulated by calcium/calmodulin. Inhibited by DYNLL1 that prevents the dimerization of the protein. Inhibited by NOSIP. Its function is as follows. Produces nitric oxide (NO) which is a messenger molecule with diverse functions throughout the body. In the brain and peripheral nervous system, NO displays many properties of a neurotransmitter. Probably has nitrosylase activity and mediates cysteine S-nitrosylation of cytoplasmic target proteins such SRR. Isoform NNOS Mu may be an effector enzyme for the dystrophin complex. The sequence is that of Nitric oxide synthase 1 from Mus musculus (Mouse).